A 375-amino-acid chain; its full sequence is Queuine tRNA-ribosyltransferase (375 aa).

Asp94 functions as the Proton acceptor in the catalytic mechanism. Substrate-binding positions include 94–98 (DSGGF), Asp148, Gln191, and Gly218. The interval 249 to 255 (GVGSPDD) is RNA binding. Residue Asp268 is the Nucleophile of the active site. The RNA binding; important for wobble base 34 recognition stretch occupies residues 273–277 (TRIAR). Residues Cys306, Cys308, Cys311, and His337 each coordinate Zn(2+).

The protein belongs to the queuine tRNA-ribosyltransferase family. Homodimer. Within each dimer, one monomer is responsible for RNA recognition and catalysis, while the other monomer binds to the replacement base PreQ1. Requires Zn(2+) as cofactor.

It catalyses the reaction 7-aminomethyl-7-carbaguanine + guanosine(34) in tRNA = 7-aminomethyl-7-carbaguanosine(34) in tRNA + guanine. It participates in tRNA modification; tRNA-queuosine biosynthesis. Its function is as follows. Catalyzes the base-exchange of a guanine (G) residue with the queuine precursor 7-aminomethyl-7-deazaguanine (PreQ1) at position 34 (anticodon wobble position) in tRNAs with GU(N) anticodons (tRNA-Asp, -Asn, -His and -Tyr). Catalysis occurs through a double-displacement mechanism. The nucleophile active site attacks the C1' of nucleotide 34 to detach the guanine base from the RNA, forming a covalent enzyme-RNA intermediate. The proton acceptor active site deprotonates the incoming PreQ1, allowing a nucleophilic attack on the C1' of the ribose to form the product. After dissociation, two additional enzymatic reactions on the tRNA convert PreQ1 to queuine (Q), resulting in the hypermodified nucleoside queuosine (7-(((4,5-cis-dihydroxy-2-cyclopenten-1-yl)amino)methyl)-7-deazaguanosine). The sequence is that of Queuine tRNA-ribosyltransferase from Thermoanaerobacter pseudethanolicus (strain ATCC 33223 / 39E) (Clostridium thermohydrosulfuricum).